Here is a 224-residue protein sequence, read N- to C-terminus: UPF0758 protein Patl_0046 (224 aa).

The 123-residue stretch at 102–224 (VFNSAQQTKH…AVSFAERGLI (123 aa)) folds into the MPN domain. 3 residues coordinate Zn(2+): histidine 173, histidine 175, and aspartate 186. The JAMM motif motif lies at 173–186 (HNHPSGVAEPSQAD).

It belongs to the UPF0758 family.

The chain is UPF0758 protein Patl_0046 from Pseudoalteromonas atlantica (strain T6c / ATCC BAA-1087).